We begin with the raw amino-acid sequence, 276 residues long: Hydroxycinnamoyl-CoA hydratase-lyase (276 aa).

Acetyl-CoA contacts are provided by Lys-29, Ala-68, Met-70, and Leu-72. Vanillin is bound at residue Tyr-75. The acetyl-CoA site is built by Gly-120, Ser-142, and Trp-146. Vanillin is bound by residues Gly-151 and Tyr-239.

This sequence belongs to the enoyl-CoA hydratase/isomerase family. As to quaternary structure, homohexamer; dimer of trimers.

The enzyme catalyses (E)-feruloyl-CoA + H2O = vanillin + acetyl-CoA. It carries out the reaction (E)-caffeoyl-CoA + H2O = 3,4-dihydroxybenzaldehyde + acetyl-CoA. It catalyses the reaction (E)-4-coumaroyl-CoA + H2O = 4-hydroxybenzaldehyde + acetyl-CoA. The catalysed reaction is (E)-feruloyl-CoA + H2O = 3-hydroxy-3-(4-hydroxy-3-methoxyphenyl)propanoyl-CoA. The enzyme catalyses 3-hydroxy-3-(4-hydroxy-3-methoxyphenyl)propanoyl-CoA = vanillin + acetyl-CoA. It carries out the reaction (E)-caffeoyl-CoA + H2O = 3-hydroxy-3-(3,4-dihydroxyphenyl)propanoyl-CoA. It catalyses the reaction 3-hydroxy-3-(3,4-dihydroxyphenyl)propanoyl-CoA = 3,4-dihydroxybenzaldehyde + acetyl-CoA. The catalysed reaction is (E)-4-coumaroyl-CoA + H2O = 3-hydroxy-3-(4-hydroxyphenyl)propanoyl-CoA. The enzyme catalyses 3-hydroxy-3-(4-hydroxyphenyl)propanoyl-CoA = 4-hydroxybenzaldehyde + acetyl-CoA. In terms of biological role, catalyzes the hydration of the acyl-CoA thioester of ferulic acid and the subsequent retro-aldol cleavage of the hydrated intermediate to yield vanillin (4-hydroxy-3-methoxy-benzaldehyde). The enzyme is also active with caffeoyl-CoA and 4-coumaroyl-CoA producing 3,4-dihydroxybenzaldehyde and 4-hydroxybenzaldehyde, respectively. The sequence is that of Hydroxycinnamoyl-CoA hydratase-lyase from Pseudomonas fluorescens.